A 168-amino-acid chain; its full sequence is Phosphopantetheine adenylyltransferase (168 aa).

Threonine 13 lines the substrate pocket. ATP is bound by residues 13–14 (TF) and histidine 21. Substrate-binding residues include lysine 45, leucine 78, and arginine 92. ATP contacts are provided by residues 93-95 (GLR), glutamate 103, and 128-134 (TQFISSS).

It belongs to the bacterial CoaD family. In terms of assembly, homohexamer. Mg(2+) is required as a cofactor.

It localises to the cytoplasm. The enzyme catalyses (R)-4'-phosphopantetheine + ATP + H(+) = 3'-dephospho-CoA + diphosphate. The protein operates within cofactor biosynthesis; coenzyme A biosynthesis; CoA from (R)-pantothenate: step 4/5. Reversibly transfers an adenylyl group from ATP to 4'-phosphopantetheine, yielding dephospho-CoA (dPCoA) and pyrophosphate. The sequence is that of Phosphopantetheine adenylyltransferase from Wolbachia pipientis subsp. Culex pipiens (strain wPip).